An 894-amino-acid polypeptide reads, in one-letter code: GTPase-activating protein GYP5 (894 aa).

Basic and acidic residues predominate over residues Met1–Asn23. The disordered stretch occupies residues Met1–Lys324. Residues Ser25 and Ser30 each carry the phosphoserine modification. Residue Thr89 is modified to Phosphothreonine. A compositionally biased stretch (basic and acidic residues) spans Ile134–Thr164. Composition is skewed to polar residues over residues Gly184–Val200 and Ser268–Thr279. Phosphoserine is present on Ser389. The region spanning Gly451 to Gly630 is the Rab-GAP TBC domain. Residues Glu732–Ser872 are a coiled coil.

The protein belongs to the GYP5 family. As to quaternary structure, interacts with GYL1 and RVS167; and is part of SEC4-containing complexes.

It localises to the cytoplasm. Its subcellular location is the bud. The protein localises to the bud neck. Its function is as follows. GTPase-activating protein which accelerates the GTP hydrolysis rate of YPT1 and SEC4. Involved in ER to Golgi trafficking and polarized exocytosis. The chain is GTPase-activating protein GYP5 (GYP5) from Saccharomyces cerevisiae (strain ATCC 204508 / S288c) (Baker's yeast).